The chain runs to 311 residues: ATP synthase subunit gamma, mitochondrial (311 aa).

Residues 1–33 constitute a mitochondrion transit peptide; sequence MLSRIVSNNATRSVMCHQAQVGILYKTNPVRTY.

The protein belongs to the ATPase gamma chain family. In terms of assembly, F-type ATPases have 2 components, CF(1) - the catalytic core - and CF(0) - the membrane proton channel. CF(1) has five subunits: alpha(3), beta(3), gamma(1), delta(1), epsilon(1). CF(0) has three main subunits: a, b and c.

The protein localises to the mitochondrion. Its subcellular location is the mitochondrion inner membrane. Its function is as follows. Mitochondrial membrane ATP synthase (F(1)F(0) ATP synthase or Complex V) produces ATP from ADP in the presence of a proton gradient across the membrane which is generated by electron transport complexes of the respiratory chain. F-type ATPases consist of two structural domains, F(1) - containing the extramembraneous catalytic core, and F(0) - containing the membrane proton channel, linked together by a central stalk and a peripheral stalk. During catalysis, ATP synthesis in the catalytic domain of F(1) is coupled via a rotary mechanism of the central stalk subunits to proton translocation. Part of the complex F(1) domain and the central stalk which is part of the complex rotary element. The gamma subunit protrudes into the catalytic domain formed of alpha(3)beta(3). Rotation of the central stalk against the surrounding alpha(3)beta(3) subunits leads to hydrolysis of ATP in three separate catalytic sites on the beta subunits. The polypeptide is ATP synthase subunit gamma, mitochondrial (ATP3) (Saccharomyces cerevisiae (strain ATCC 204508 / S288c) (Baker's yeast)).